We begin with the raw amino-acid sequence, 121 residues long: Large ribosomal subunit protein uL18 (121 aa).

This sequence belongs to the universal ribosomal protein uL18 family. As to quaternary structure, part of the 50S ribosomal subunit; part of the 5S rRNA/L5/L18/L25 subcomplex. Contacts the 5S and 23S rRNAs.

Its function is as follows. This is one of the proteins that bind and probably mediate the attachment of the 5S RNA into the large ribosomal subunit, where it forms part of the central protuberance. The protein is Large ribosomal subunit protein uL18 of Methylibium petroleiphilum (strain ATCC BAA-1232 / LMG 22953 / PM1).